Consider the following 557-residue polypeptide: Alpha-glucosidase (557 aa).

The active-site Nucleophile is Asp-201. The Proton donor role is filled by Glu-256.

The protein belongs to the glycosyl hydrolase 13 family.

The enzyme catalyses Hydrolysis of terminal, non-reducing (1-&gt;4)-linked alpha-D-glucose residues with release of alpha-D-glucose.. The polypeptide is Alpha-glucosidase (agl) (Pediococcus pentosaceus).